Here is a 364-residue protein sequence, read N- to C-terminus: Ferrochelatase (364 aa).

H213 and E294 together coordinate Fe cation.

This sequence belongs to the ferrochelatase family.

The protein localises to the cytoplasm. The enzyme catalyses heme b + 2 H(+) = protoporphyrin IX + Fe(2+). It participates in porphyrin-containing compound metabolism; protoheme biosynthesis; protoheme from protoporphyrin-IX: step 1/1. Its function is as follows. Catalyzes the ferrous insertion into protoporphyrin IX. The polypeptide is Ferrochelatase (Chromobacterium violaceum (strain ATCC 12472 / DSM 30191 / JCM 1249 / CCUG 213 / NBRC 12614 / NCIMB 9131 / NCTC 9757 / MK)).